The primary structure comprises 270 residues: MTNHMLDEVRSAAVAAARTARESYRAGKIQPTAGVAPGMTQANMIALPRDWAWDFLLYAQRNPKACPVLDVIEAGAYHTVLAEGADIRTDIPLYRVWRNGRLVEEVADATPLWQEHPDLVTFLIGCSFTFETPLLEAGIEVRHITDGSNVPMYRTNRQCRPAGRLHGELVVSMRPIAASRIADAAMISGRFPSVHGAPVHVGNPEALGIADIHRPDFGDAVRIESGEIPVFWACGVTPQAAVMASGVPFAVTHAPGHMFVTDVPDSTYHV.

The protein belongs to the D-glutamate cyclase family.

This chain is Putative hydro-lyase Reut_A2449, found in Cupriavidus pinatubonensis (strain JMP 134 / LMG 1197) (Cupriavidus necator (strain JMP 134)).